Consider the following 298-residue polypeptide: NADH-cytochrome b5 reductase 1 (298 aa).

The chain crosses the membrane as a helical span at residues 14–34; it reads VILAGAYLIDPSALPFVAAGV. The FAD-binding FR-type domain occupies 56 to 159; that stretch reads KEYRKFKLVD…RGPKGQFSYT (104 aa). Residues 139–154 and 165–197 contribute to the FAD site; these read SELSIGDSINARGPKG and AIGMIAGGTGLTPMLQIIRAIVKNPEDKTQVNF.

This sequence belongs to the flavoprotein pyridine nucleotide cytochrome reductase family. In terms of assembly, monomer. Component of the 2-(3-amino-3-carboxypropyl)histidine synthase complex composed of DPH1, DPH2, DPH3 and a NADH-dependent reductase, predominantly CBR1. The cofactor is FAD.

Its subcellular location is the mitochondrion outer membrane. The catalysed reaction is 2 Fe(III)-[cytochrome b5] + NADH = 2 Fe(II)-[cytochrome b5] + NAD(+) + H(+). The enzyme catalyses 2 Fe(3+)-[Dph3] + NADH = 2 Fe(2+)-[Dph3] + NAD(+) + H(+). It functions in the pathway protein modification; peptidyl-diphthamide biosynthesis. Its function is as follows. NADH-dependent reductase for DPH3 and cytochrome b5. Required for the first step of diphthamide biosynthesis, a post-translational modification of histidine which occurs in elongation factor 2. DPH1 and DPH2 transfer a 3-amino-3-carboxypropyl (ACP) group from S-adenosyl-L-methionine (SAM) to a histidine residue, the reaction is assisted by a reduction system comprising DPH3 and a NADH-dependent reductase, predominantly CBR1. By reducing DPH3, also involved in the formation of the tRNA wobble base modification mcm5s 2U (5-methoxycarbonylmethyl-2-thiouridine), mediated by the elongator complex. The cytochrome b5/NADH cytochrome b5 reductase electron transfer system supports the catalytic activity of several sterol biosynthetic enzymes. In Mortierella alpina (Oleaginous fungus), this protein is NADH-cytochrome b5 reductase 1 (CBR1).